Here is a 235-residue protein sequence, read N- to C-terminus: 7-cyano-7-deazaguanine synthase (235 aa).

9 to 19 (FSGGQDSTTCL) contacts ATP. Zn(2+)-binding residues include cysteine 197, cysteine 212, cysteine 215, and cysteine 218.

This sequence belongs to the QueC family. It depends on Zn(2+) as a cofactor.

The catalysed reaction is 7-carboxy-7-deazaguanine + NH4(+) + ATP = 7-cyano-7-deazaguanine + ADP + phosphate + H2O + H(+). It participates in purine metabolism; 7-cyano-7-deazaguanine biosynthesis. Catalyzes the ATP-dependent conversion of 7-carboxy-7-deazaguanine (CDG) to 7-cyano-7-deazaguanine (preQ(0)). The sequence is that of 7-cyano-7-deazaguanine synthase from Polaromonas sp. (strain JS666 / ATCC BAA-500).